We begin with the raw amino-acid sequence, 593 residues long: DNA topoisomerase I, mitochondrial (593 aa).

Residues 1–43 constitute a mitochondrion transit peptide; the sequence is MLLLWLRALCRRFQHVPRRVPSRQVSRGSKASRAGWGETSKSS. Interaction with DNA regions lie at residues 254-255, 317-322, and 414-416; these read KY, RTGNEK, and TAK. The region spanning 261-593 is the Topo IB-type catalytic domain; the sequence is SSKPKGEMDW…FNQAGEDFEF (333 aa). The active-site O-(3'-phospho-DNA)-tyrosine intermediate is Tyr551.

This sequence belongs to the type IB topoisomerase family. The cofactor is Ca(2+). Mg(2+) serves as cofactor.

The protein localises to the mitochondrion. The catalysed reaction is ATP-independent breakage of single-stranded DNA, followed by passage and rejoining.. Its function is as follows. Releases the supercoiling and torsional tension of DNA introduced during duplication of mitochondrial DNA by transiently cleaving and rejoining one strand of the DNA duplex. Introduces a single-strand break via transesterification at a target site in duplex DNA. The scissile phosphodiester is attacked by the catalytic tyrosine of the enzyme, resulting in the formation of a DNA-(3'-phosphotyrosyl)-enzyme intermediate and the expulsion of a 5'-OH DNA strand. The free DNA strand then rotates around the intact phosphodiester bond on the opposing strand, thus removing DNA supercoils. Finally, in the religation step, the DNA 5'-OH attacks the covalent intermediate to expel the active-site tyrosine and restore the DNA phosphodiester backbone. The polypeptide is DNA topoisomerase I, mitochondrial (Top1mt) (Rattus norvegicus (Rat)).